Here is a 45-residue protein sequence, read N- to C-terminus: Large ribosomal subunit protein bL34 (45 aa).

Residues 1–27 (MTKRTLGGTSRKRKRVSGFRVRMRTHT) are disordered. The span at 10–27 (SRKRKRVSGFRVRMRTHT) shows a compositional bias: basic residues.

It belongs to the bacterial ribosomal protein bL34 family.

The polypeptide is Large ribosomal subunit protein bL34 (Prochlorococcus marinus (strain MIT 9211)).